A 132-amino-acid polypeptide reads, in one-letter code: MSLSDPLGDMLTRIRNAQRARHAVCVAPASKLRASVLEALKREGYIRGFAAEELRKGVAQLRIELKYVEGQPVIKEIHRVSKPGRRVYSKIKELPRVYAGLGVSILSTPRGVLSDVEARAANVGGEVLCRVF.

It belongs to the universal ribosomal protein uS8 family. As to quaternary structure, part of the 30S ribosomal subunit. Contacts proteins S5 and S12.

Functionally, one of the primary rRNA binding proteins, it binds directly to 16S rRNA central domain where it helps coordinate assembly of the platform of the 30S subunit. This chain is Small ribosomal subunit protein uS8, found in Gluconobacter oxydans (strain 621H) (Gluconobacter suboxydans).